The following is a 1066-amino-acid chain: Pumilio homolog 2 (1066 aa).

Positions 1 to 260 are interaction with SNAPIN; the sequence is MNHDFQALAL…ATVGLFDYNS (260 aa). Phosphoserine occurs at positions 67, 82, and 102. The tract at residues 106-204 is disordered; sequence KLDSRFRKGN…NPSEGLGPLP (99 aa). A compositionally biased stretch (basic and acidic residues) spans 119–133; it reads RDAETDGPEKGDQKG. Phosphoserine occurs at positions 136, 178, and 182. Thr-184 and Thr-396 each carry phosphothreonine. The disordered stretch occupies residues 494 to 553; it reads STNGLFRPIGTQPPQQQQQQPSTNLQSNSFYGSSSLTNSSQSSSLFSHGPGQPGSTSLGF. A compositionally biased stretch (low complexity) spans 505 to 514; sequence QPPQQQQQQP. Polar residues predominate over residues 515-525; sequence STNLQSNSFYG. The segment covering 526 to 540 has biased composition (low complexity); it reads SSSLTNSSQSSSLFS. Residues Ser-587 and Ser-592 each carry the phosphoserine modification. Residues 620 to 650 are disordered; it reads SPIGMPLPSQTPGHSLTPPPSLSSHGSSSSL. Over residues 630–650 the composition is skewed to low complexity; it reads TPGHSLTPPPSLSSHGSSSSL. Arg-674 carries the omega-N-methylarginine modification. 2 positions are modified to phosphoserine: Ser-684 and Ser-700. In terms of domain architecture, PUM-HD spans 706–1048; sequence GRSRLLEDFR…HILAKLEKYY (343 aa). Pumilio repeat units follow at residues 726–761, 762–797, 798–835, 836–871, 872–907, 908–943, 944–979, and 983–1022; these read DLIGHIVEFSQDQHGSRFIQQKLERATPAERQMVFN, EILQAAYQLMTDVFGNYVIQKFFEFGSLDQKLALAT, RIRGHVLPLALQMYGCRVIQKALESISSDQQVISEMVK, ELDGHVLKCVKDQNGNHVVQKCIECVQPQSLQFIID, AFKGQVFVLSTHPYGCRVIQRILEHCTAEQTLPILE, ELHQHTEQLVQDQYGNYVIQHVLEHGRPEDKSKIVS, EIRGKVLALSQHKFASNVVEKCVTHASRAERALLID, and CQNDGPHSALYTMMKDQYANYVVQKMIDMAEPAQRKIIMH. An adenine-nucleotide binding in RNA target region spans residues 741–745; the sequence is SRFIQ. Positions 777-781 are uracil-nucleotide binding in RNA target; the sequence is NYVIQ. Residues 813–817 form an adenine-nucleotide binding in RNA target region; sequence CRVIQ. Positions 851–855 are non-specific-nucleotide binding in RNA target; it reads NHVVQ. The segment at 887-891 is adenine-nucleotide binding in RNA target; the sequence is CRVIQ. Residues 923-927 form a uracil-nucleotide binding in RNA target region; that stretch reads NYVIQ. The segment at 959 to 963 is guanine-nucleotide binding in RNA target; the sequence is SNVVE. The segment at 1002–1006 is uracil-nucleotide binding in RNA target; it reads NYVVQ.

Homodimer; homodimerizes in vitro. Interacts with DAZ1, DAZL and NANOS1 via its pumilio repeats. Interacts with NANOS3. Interacts with SNAPIN. Recruits the CCR4-POP2-NOT deadenylase leading to translational inhibition and mRNA degradation. Interacts with DDX20. In case of viral infection, interacts with DHX58. Interacts with TRIM71 (via NHL repeats) in an RNA-dependent manner. In terms of tissue distribution, expressed in male germ cells of adult testis (at protein level). Highly expressed in testis and ovary. Predominantly expressed in stem cells and germ cells. Expressed at lower level in brain, heart, kidney, liver, muscle, placenta, intestine and stomach Expressed in cerebellum, corpus callosum, caudate nucleus, hippocampus, medulla oblongata and putamen. Expressed in all fetal tissues tested.

It is found in the cytoplasm. Its subcellular location is the cytoplasmic granule. The protein localises to the perinuclear region. Sequence-specific RNA-binding protein that acts as a post-transcriptional repressor by binding the 3'-UTR of mRNA targets. Binds to an RNA consensus sequence, the Pumilio Response Element (PRE), 5'-UGUANAUA-3', that is related to the Nanos Response Element (NRE) (, PubMed:21397187). Mediates post-transcriptional repression of transcripts via different mechanisms: acts via direct recruitment of the CCR4-POP2-NOT deadenylase leading to translational inhibition and mRNA degradation. Also mediates deadenylation-independent repression by promoting accessibility of miRNAs. Acts as a post-transcriptional repressor of E2F3 mRNAs by binding to its 3'-UTR and facilitating miRNA regulation. Plays a role in cytoplasmic sensing of viral infection. Represses a program of genes necessary to maintain genomic stability such as key mitotic, DNA repair and DNA replication factors. Its ability to repress those target mRNAs is regulated by the lncRNA NORAD (non-coding RNA activated by DNA damage) which, due to its high abundance and multitude of PUMILIO binding sites, is able to sequester a significant fraction of PUM1 and PUM2 in the cytoplasm. May regulate DCUN1D3 mRNA levels. May support proliferation and self-renewal of stem cells. Binds specifically to miRNA MIR199A precursor, with PUM1, regulates miRNA MIR199A expression at a postranscriptional level. This is Pumilio homolog 2 (PUM2) from Homo sapiens (Human).